We begin with the raw amino-acid sequence, 349 residues long: DCD domain-containing protein NRP (349 aa).

The disordered stretch occupies residues 157–201; it reads NNNKNKGIDEDHQIQKGGKKNRKNQQNNNNQRNEDDKNNGLDKRF. Residues 188-201 show a composition bias toward basic and acidic residues; it reads RNEDDKNNGLDKRF. The DCD domain maps to 214–346; the sequence is ETIGGYIFVC…VLSLLDIFAD (133 aa).

As to quaternary structure, interacts with CRY2 in the cytoplasm. Interacts with Verticillium dahliae PevD1. Interacts with FYPP3. As to expression, highly expressed in sensecent leaves, cauline leaves and sepals. Expressed in the shoot apical meristem, leaf veins, central cylinder, root hair zone, root tips, rosette leaves, flowers and siliques.

It localises to the cytoplasm. Its function is as follows. Contributes to the initial phase of responses to abiotic and biotic stress signals. Binds FYPP3 and facilitates FYPP3 degradation to promote abscisic acid (ABA) response. This Arabidopsis thaliana (Mouse-ear cress) protein is DCD domain-containing protein NRP.